The following is a 134-amino-acid chain: NADH-quinone oxidoreductase subunit A 1 (134 aa).

3 helical membrane passes run 10 to 30 (LIPL…LLLA), 65 to 85 (FYLI…ILAW), and 94 to 114 (IPGL…LVWL).

The protein belongs to the complex I subunit 3 family. As to quaternary structure, NDH-1 is composed of 14 different subunits. Subunits NuoA, H, J, K, L, M, N constitute the membrane sector of the complex.

The protein localises to the cell inner membrane. The catalysed reaction is a quinone + NADH + 5 H(+)(in) = a quinol + NAD(+) + 4 H(+)(out). Its function is as follows. NDH-1 shuttles electrons from NADH, via FMN and iron-sulfur (Fe-S) centers, to quinones in the respiratory chain. The immediate electron acceptor for the enzyme in this species is believed to be ubiquinone. Couples the redox reaction to proton translocation (for every two electrons transferred, four hydrogen ions are translocated across the cytoplasmic membrane), and thus conserves the redox energy in a proton gradient. The polypeptide is NADH-quinone oxidoreductase subunit A 1 (Citrifermentans bemidjiense (strain ATCC BAA-1014 / DSM 16622 / JCM 12645 / Bem) (Geobacter bemidjiensis)).